We begin with the raw amino-acid sequence, 674 residues long: Forkhead box protein P1 (674 aa).

Residues 1–19 (MMQESGTETKSNGSAIQNG) show a composition bias toward polar residues. The segment at 1-44 (MMQESGTETKSNGSAIQNGSSGGNHLLECGSLREGRSNGETPAV) is disordered. S82 is subject to Phosphoserine. Over residues 269-281 (MNPHASTNGQLSV) the composition is skewed to polar residues. Residues 269–296 (MNPHASTNGQLSVHTPKRESLSHEEHPH) form a disordered region. The segment covering 284-296 (PKRESLSHEEHPH) has biased composition (basic and acidic residues). K285 is covalently cross-linked (Glycyl lysine isopeptide (Lys-Gly) (interchain with G-Cter in SUMO2)). The C2H2-type zinc-finger motif lies at 304-329 (GVCKWPGCEAVCEDFQSFLKHLNSEH). Positions 346–367 (VQQLELQLAKDKERLQAMMTHL) are leucine-zipper. Glycyl lysine isopeptide (Lys-Gly) (interchain with G-Cter in SUMO2) cross-links involve residues K370 and K375. Residues 380-384 (PLNLV) form a CTBP1-binding region. The span at 388-401 (TLSKSASEASPQSL) shows a compositional bias: polar residues. Residues 388–427 (TLSKSASEASPQSLPHTPTTPTAPITPATQGPSVITTTSM) form a disordered region. A compositionally biased stretch (low complexity) spans 402-419 (PHTPTTPTAPITPATQGP). K440 is covalently cross-linked (Glycyl lysine isopeptide (Lys-Gly) (interchain with G-Cter in SUMO2)). Residues 462 to 552 (RPPFTYASLI…PQKISGNPSL (91 aa)) constitute a DNA-binding region (fork-head). The disordered stretch occupies residues 608–674 (EHTNSNESDS…EDEPVNEDME (67 aa)). The span at 609–620 (HTNSNESDSSPG) shows a compositional bias: polar residues. Position 650 is a phosphothreonine (T650). S655 carries the post-translational modification Phosphoserine. Residues 664 to 674 (YEDEPVNEDME) show a composition bias toward acidic residues.

Forms homodimers and heterodimers with FOXP2 and FOXP4. Dimerization is required for DNA-binding. Self-associates. Interacts with CTBP1. Interacts with NCOR2 and AR. Interacts with FOXP2. Interacts with TBR1. Interacts with AURKA; this interaction facilitates the phosphorylation of FOXP1, which suppresses the expression of FBXL7. Interacts with ZMYM2.

It is found in the nucleus. In terms of biological role, transcriptional repressor. Can act with CTBP1 to synergistically repress transcription but CTPBP1 is not essential. Plays an important role in the specification and differentiation of lung epithelium. Acts cooperatively with FOXP4 to regulate lung secretory epithelial cell fate and regeneration by restricting the goblet cell lineage program; the function may involve regulation of AGR2. Essential transcriptional regulator of B-cell development. Involved in regulation of cardiac muscle cell proliferation. Involved in the columnar organization of spinal motor neurons. Promotes the formation of the lateral motor neuron column (LMC) and the preganglionic motor column (PGC) and is required for respective appropriate motor axon projections. The segment-appropriate generation of spinal cord motor columns requires cooperation with other Hox proteins. Can regulate PITX3 promoter activity; may promote midbrain identity in embryonic stem cell-derived dopamine neurons by regulating PITX3. Negatively regulates the differentiation of T follicular helper cells T(FH)s. Involved in maintenance of hair follicle stem cell quiescence; the function probably involves regulation of FGF18. Represses transcription of various pro-apoptotic genes and cooperates with NF-kappa B-signaling in promoting B-cell expansion by inhibition of caspase-dependent apoptosis. Binds to CSF1R promoter elements and is involved in regulation of monocyte differentiation and macrophage functions; repression of CSF1R in monocytes seems to involve NCOR2 as corepressor. Involved in endothelial cell proliferation, tube formation and migration indicative for a role in angiogenesis; the role in neovascularization seems to implicate suppression of SEMA5B. Can negatively regulate androgen receptor signaling. Acts as a transcriptional activator of the FBXL7 promoter; this activity is regulated by AURKA. This chain is Forkhead box protein P1 (FOXP1), found in Bos taurus (Bovine).